The sequence spans 313 residues: Putative S-adenosyl-L-methionine-dependent methyltransferase MAV_5150 (313 aa).

S-adenosyl-L-methionine is bound by residues aspartate 139 and aspartate 168–leucine 169.

The protein belongs to the UPF0677 family.

Exhibits S-adenosyl-L-methionine-dependent methyltransferase activity. The protein is Putative S-adenosyl-L-methionine-dependent methyltransferase MAV_5150 of Mycobacterium avium (strain 104).